We begin with the raw amino-acid sequence, 494 residues long: Ell-associated factor Eaf (494 aa).

A compositionally biased stretch (polar residues) spans 119 to 138 (KTRSEVTNKPSLMSATNAPM). Disordered stretches follow at residues 119 to 212 (KTRS…PAWH) and 243 to 494 (QANI…DDDD). Low complexity predominate over residues 139–156 (SNGAPVPSSAAAGTGSAG). The segment covering 159–178 (ENSTMRISSKTKVSTGSRRN) has biased composition (polar residues). The residue at position 188 (Ser-188) is a Phosphoserine. Composition is skewed to polar residues over residues 243 to 256 (QANISGSSTGSSAG) and 280 to 306 (QQLTQRSSPPMQQQQHQNYGRGSNNYA). A compositionally biased stretch (low complexity) spans 307–319 (QQQQQQQQQQLQQ). Residues 320-332 (RASFSHSNHSNSM) show a composition bias toward polar residues. Residues 344–373 (QTAQSMAQAAAALEQQIGGELSASSSSSES) show a composition bias toward low complexity. Positions 374-389 (DSSDSDSGSDSDDSTE) are enriched in acidic residues. Positions 414 to 424 (HQQQQHMHQLP) are enriched in low complexity. Positions 437–454 (SHHHHQQQQQSHHHHHHQ) are enriched in basic residues. Low complexity-rich tracts occupy residues 455 to 464 (QQQQQQHQQS) and 475 to 488 (NDLLQNDLQLSSNS).

Belongs to the EAF family.

Its subcellular location is the nucleus. In terms of biological role, promotes transcriptional elongation by Su(Tpl)/ELL. Essential for development. This chain is Ell-associated factor Eaf, found in Drosophila virilis (Fruit fly).